The sequence spans 314 residues: Replication initiation protein (314 aa).

It belongs to the plasmid replication initiation factor family.

Functionally, this protein is probably a specific topoisomerase involved in initiating replication. This protein is specifically required and may be rate-limiting for replication of the plasmid in vivo. The polypeptide is Replication initiation protein (repC) (Staphylococcus aureus).